The sequence spans 206 residues: MAEDADMRNELEEMQRRADQLADESLESTRRMLQLVEESKDAGIRTLVMLDEQGEQLERIEEGMDQINKDMKEAEKNLTDLGKFCGLCVCPCNKLKSSDAYKKAWGNNQDGVVASQPARVVDEREQMAISGGFIRRVTNDARENEMDENLEQVSGIIGNLRHMALDMGNEIDTQNRQIDRIMEKADSNKTRIDEANQRATKMLGSG.

Over residues 1–20 the composition is skewed to basic and acidic residues; sequence MAEDADMRNELEEMQRRADQ. The interval 1–23 is disordered; the sequence is MAEDADMRNELEEMQRRADQLAD. The t-SNARE coiled-coil homology 1 domain maps to 19–81; it reads DQLADESLES…KEAEKNLTDL (63 aa). Residues Cys85, Cys88, Cys90, and Cys92 are each lipidated (S-palmitoyl cysteine). At Thr138 the chain carries Phosphothreonine. The t-SNARE coiled-coil homology 2 domain maps to 140-202; it reads DARENEMDEN…DEANQRATKM (63 aa). At Ser187 the chain carries Phosphoserine.

The protein belongs to the SNAP-25 family. In terms of assembly, part of the SNARE core complex containing SNAP25, VAMP2 and STX1A. This complex binds CPLX1. Interacts with TRIM9, RIMS1 and SNAPIN. Binds STXBP6. Found in a ternary complex with STX1A and VAMP8. Associates with the BLOC-1 complex. Isoform 1 and isoform 2 interact with BLOC1S6. Interacts with alpha-synuclein/SNCA. In terms of processing, palmitoylated. Cys-85 appears to be the main site, and palmitoylation is required for membrane association.

The protein localises to the membrane. It is found in the synapse. The protein resides in the synaptosome. Its subcellular location is the cell membrane. T-SNARE involved in the molecular regulation of neurotransmitter release. May play an important role in the synaptic function of specific neuronal systems. Associates with proteins involved in vesicle docking and membrane fusion. This chain is Synaptosomal-associated protein 25 (SNAP25), found in Gallus gallus (Chicken).